Reading from the N-terminus, the 229-residue chain is UPF0758 protein MM_2791 (229 aa).

The 123-residue stretch at 106-228 folds into the MPN domain; sequence KISSPKDVYT…YVSLKDEGFV (123 aa). 3 residues coordinate Zn(2+): H177, H179, and D190. Residues 177–190 carry the JAMM motif motif; the sequence is HNHPSGDPSPSRED.

Belongs to the UPF0758 family.

The chain is UPF0758 protein MM_2791 from Methanosarcina mazei (strain ATCC BAA-159 / DSM 3647 / Goe1 / Go1 / JCM 11833 / OCM 88) (Methanosarcina frisia).